The following is a 468-amino-acid chain: Bifunctional protein HldE (468 aa).

Positions 1–315 are ribokinase; that stretch reads MAKKVEILVV…ELLRSRANAE (315 aa). Residue 192–195 participates in ATP binding; sequence NRKE. Asp-260 is an active-site residue. A cytidylyltransferase region spans residues 340–468; the sequence is FTNGCFDILH…IVKRIKDADK (129 aa).

In the N-terminal section; belongs to the carbohydrate kinase PfkB family. This sequence in the C-terminal section; belongs to the cytidylyltransferase family. Homodimer.

It catalyses the reaction D-glycero-beta-D-manno-heptose 7-phosphate + ATP = D-glycero-beta-D-manno-heptose 1,7-bisphosphate + ADP + H(+). It carries out the reaction D-glycero-beta-D-manno-heptose 1-phosphate + ATP + H(+) = ADP-D-glycero-beta-D-manno-heptose + diphosphate. It functions in the pathway nucleotide-sugar biosynthesis; ADP-L-glycero-beta-D-manno-heptose biosynthesis; ADP-L-glycero-beta-D-manno-heptose from D-glycero-beta-D-manno-heptose 7-phosphate: step 1/4. It participates in nucleotide-sugar biosynthesis; ADP-L-glycero-beta-D-manno-heptose biosynthesis; ADP-L-glycero-beta-D-manno-heptose from D-glycero-beta-D-manno-heptose 7-phosphate: step 3/4. Catalyzes the phosphorylation of D-glycero-D-manno-heptose 7-phosphate at the C-1 position to selectively form D-glycero-beta-D-manno-heptose-1,7-bisphosphate. Its function is as follows. Catalyzes the ADP transfer from ATP to D-glycero-beta-D-manno-heptose 1-phosphate, yielding ADP-D-glycero-beta-D-manno-heptose. The polypeptide is Bifunctional protein HldE (Campylobacter curvus (strain 525.92)).